The sequence spans 485 residues: Glutamyl-tRNA(Gln) amidotransferase subunit A (485 aa).

Residues K80 and S155 each act as charge relay system in the active site. S179 serves as the catalytic Acyl-ester intermediate.

It belongs to the amidase family. GatA subfamily. As to quaternary structure, heterotrimer of A, B and C subunits.

It catalyses the reaction L-glutamyl-tRNA(Gln) + L-glutamine + ATP + H2O = L-glutaminyl-tRNA(Gln) + L-glutamate + ADP + phosphate + H(+). Functionally, allows the formation of correctly charged Gln-tRNA(Gln) through the transamidation of misacylated Glu-tRNA(Gln) in organisms which lack glutaminyl-tRNA synthetase. The reaction takes place in the presence of glutamine and ATP through an activated gamma-phospho-Glu-tRNA(Gln). The chain is Glutamyl-tRNA(Gln) amidotransferase subunit A from Endomicrobium trichonymphae.